The sequence spans 478 residues: Glycogen synthase (478 aa).

Lys16 contributes to the ADP-alpha-D-glucose binding site.

Belongs to the glycosyltransferase 1 family. Bacterial/plant glycogen synthase subfamily.

It carries out the reaction [(1-&gt;4)-alpha-D-glucosyl](n) + ADP-alpha-D-glucose = [(1-&gt;4)-alpha-D-glucosyl](n+1) + ADP + H(+). The protein operates within glycan biosynthesis; glycogen biosynthesis. Its function is as follows. Synthesizes alpha-1,4-glucan chains using ADP-glucose. This is Glycogen synthase from Lachnospira eligens (strain ATCC 27750 / DSM 3376 / VPI C15-48 / C15-B4) (Eubacterium eligens).